The primary structure comprises 140 residues: uncharacterized protein (140 aa).

One can recognise a VOC domain in the interval 4-127; the sequence is TLTHLALHVP…AGNYVEFSYG (124 aa).

This is an uncharacterized protein from Pseudomonas aeruginosa (strain ATCC 15692 / DSM 22644 / CIP 104116 / JCM 14847 / LMG 12228 / 1C / PRS 101 / PAO1).